The following is a 238-amino-acid chain: tRNA (guanine-N(7)-)-methyltransferase (238 aa).

S-adenosyl-L-methionine contacts are provided by Glu68, Glu93, Asp120, and Asp143. The active site involves Asp143. Substrate contacts are provided by residues Lys147, Asp179, and 216-219 (TKFE).

This sequence belongs to the class I-like SAM-binding methyltransferase superfamily. TrmB family.

It catalyses the reaction guanosine(46) in tRNA + S-adenosyl-L-methionine = N(7)-methylguanosine(46) in tRNA + S-adenosyl-L-homocysteine. It participates in tRNA modification; N(7)-methylguanine-tRNA biosynthesis. Functionally, catalyzes the formation of N(7)-methylguanine at position 46 (m7G46) in tRNA. In Shewanella frigidimarina (strain NCIMB 400), this protein is tRNA (guanine-N(7)-)-methyltransferase.